A 243-amino-acid polypeptide reads, in one-letter code: UPF0246 protein SAG2081 (243 aa).

Belongs to the UPF0246 family.

This Streptococcus agalactiae serotype V (strain ATCC BAA-611 / 2603 V/R) protein is UPF0246 protein SAG2081.